The sequence spans 276 residues: Protein MGF 360-15R (276 aa).

The protein belongs to the asfivirus MGF 360 family.

Plays a role in virus cell tropism, and may be required for efficient virus replication in macrophages. This chain is Protein MGF 360-15R, found in African swine fever virus (isolate Tick/South Africa/Pretoriuskop Pr4/1996) (ASFV).